Consider the following 478-residue polypeptide: Shikimate biosynthesis protein AroDE (478 aa).

Residues 1–208 are 3-dehydroquinate dehydratase; sequence MLCTIIRGPS…LNHHYFYNFT (208 aa). 3-dehydroquinate is bound by residues S21, 29–31, and 55–57; these read EMR and TWK. Residue H110 is the Proton donor/acceptor; for 3-dehydroquinate dehydratase activity of the active site. Catalysis depends on K133, which acts as the Schiff-base intermediate with substrate; for 3-dehydroquinate dehydratase activity. R171 and Q196 together coordinate 3-dehydroquinate. A shikimate 5-dehydrogenase region spans residues 209 to 478; sequence NLSPQSQICA…VLASLFSIAA (270 aa). Residue 226-228 coordinates shikimate; it reads SIG. Residue K277 is the Proton acceptor; for shikimate dehydrogenase activity of the active site. N298 and D313 together coordinate shikimate. NADP(+) is bound by residues 337–341, 360–362, and G435; these read GAGGA and NRT. Position 442 (Q442) interacts with shikimate.

This sequence in the N-terminal section; belongs to the type-I 3-dehydroquinase family. The protein in the C-terminal section; belongs to the shikimate dehydrogenase family.

It catalyses the reaction 3-dehydroquinate = 3-dehydroshikimate + H2O. The catalysed reaction is shikimate + NADP(+) = 3-dehydroshikimate + NADPH + H(+). It functions in the pathway metabolic intermediate biosynthesis; chorismate biosynthesis; chorismate from D-erythrose 4-phosphate and phosphoenolpyruvate: step 3/7. It participates in metabolic intermediate biosynthesis; chorismate biosynthesis; chorismate from D-erythrose 4-phosphate and phosphoenolpyruvate: step 4/7. Functionally, bifunctional enzyme that catalyzes two sequential steps of the aromatic amino acids biosynthetic pathway. In the first reaction, the AroD domain catalyzes the cis-dehydration of 3-dehydroquinate (DHQ) and introduces the first double bond of the aromatic ring to yield 3-dehydroshikimate; in the second reaction, the AroE domain catalyzes the reversible NADPH linked reduction of 3-dehydroshikimate (DHSA) to yield shikimate (SA). The protein is Shikimate biosynthesis protein AroDE of Chlamydia muridarum (strain MoPn / Nigg).